The following is a 368-amino-acid chain: C-glycoside deglycosidase alpha subunit (368 aa).

Position 145 (glutamate 145) interacts with a divalent metal cation. Histidine 147 serves as the catalytic Proton acceptor. A divalent metal cation is bound by residues aspartate 177, histidine 275, and glutamate 311.

Belongs to the C-glycoside deglycosidase alpha subunit family. In terms of assembly, heterodimer composed of an alpha subunit (CarB) and a beta subunit (CarC). The cofactor is a divalent metal cation.

It carries out the reaction 3''-dehydroisovitexin = 1,5-anhydro-D-erythro-hex-1-en-3-ulose + apigenin. It catalyses the reaction 3''-dehydroisoorientin = 1,5-anhydro-D-erythro-hex-1-en-3-ulose + luteolin. Functionally, carbon-carbon bond-cleaving enzyme which participates in the metabolism of C-glycosides. Acts on the C6-glycosylated compounds 3''-dehydroisovitexin (3''-oxo-isovitexin) and 3''-dehydroisoorientin (3''-oxo-homoorientin). Shows weak activity with 3'-dehydromangiferin (3'-oxo-mangiferin). This is C-glycoside deglycosidase alpha subunit from Microbacterium trichothecenolyticum (Aureobacterium trichothecenolyticum).